The following is a 282-amino-acid chain: Putative 4-diphosphocytidyl-2-C-methyl-D-erythritol kinase (282 aa).

The active site involves K10. Position 94 to 104 (94 to 104 (PICAGLGGGSS)) interacts with ATP. D136 is an active-site residue.

Belongs to the GHMP kinase family. IspE subfamily.

The enzyme catalyses 4-CDP-2-C-methyl-D-erythritol + ATP = 4-CDP-2-C-methyl-D-erythritol 2-phosphate + ADP + H(+). Its function is as follows. Catalyzes the phosphorylation of the position 2 hydroxy group of 4-diphosphocytidyl-2C-methyl-D-erythritol. In Streptococcus mutans serotype c (strain ATCC 700610 / UA159), this protein is Putative 4-diphosphocytidyl-2-C-methyl-D-erythritol kinase (ipk).